The primary structure comprises 469 residues: 3-isopropylmalate dehydratase large subunit (469 aa).

Residues Cys350, Cys410, and Cys413 each coordinate [4Fe-4S] cluster.

It belongs to the aconitase/IPM isomerase family. LeuC type 1 subfamily. Heterodimer of LeuC and LeuD. [4Fe-4S] cluster is required as a cofactor.

The catalysed reaction is (2R,3S)-3-isopropylmalate = (2S)-2-isopropylmalate. The protein operates within amino-acid biosynthesis; L-leucine biosynthesis; L-leucine from 3-methyl-2-oxobutanoate: step 2/4. Its function is as follows. Catalyzes the isomerization between 2-isopropylmalate and 3-isopropylmalate, via the formation of 2-isopropylmaleate. The polypeptide is 3-isopropylmalate dehydratase large subunit (Rhizobium etli (strain ATCC 51251 / DSM 11541 / JCM 21823 / NBRC 15573 / CFN 42)).